The chain runs to 772 residues: DPSKSFDSAIYPDRKMIVFLFAEDSGRGTYAITQDGVFATIVATVKSAAAAPITLLEVGAFRDNDLVEISTTFVAGGVNLGSSVPTTQPNVPSDGVVVEIGKVTGSVGTTVEIPVYFRGVPSKGIANCDFVFRYDPNVLEIIGIDPRSIIVDPNPTKSFDTAIYADRKIIVFLFCGRQRNRSVSITKDGVFAKIRATVKSSAPAYITFDEVGGFADNDLVEQKVSFIDGGVNVGNATPTKGATPTNTATPTKSATATPPGHSVPTNTPTNTPANTPVSGNLKVEFYNSNPSDTTNSINPQFKVTNTGSSAIDLSKLTLRYYYTVDGQKDQTFWCDHAAIIGSNGSYNGITSNVKGTFVKMSSSTNNADTYLEISFTGGTLEPGAHVQIQGRFAKNDWSNYTQSNDYSFKSRSQFVEWDQVTAYLNGVLVWGKEPGGSVVPSTQPVTTPPATTKPPATTIPPSDDPNAIKIKVDTVNAKPGDTVNIPVRFSGIPSKGIANCDFVYSYDPNVLEIIEIKPGELIVDPNPDKSFDTAVYPDRKMIVFLFAEDSGTGAYAITEDGVFATIVAKVKEGAPEGFSAIEISEFGAFADNDLVEVETDLINGGVLVTNKPVIEGYKVSGYILPDFSFDATVAPLVKAGFKVEIVGTELYAVTDANGYFEITGVPANASGYTLKISRATYLDRVIANVVVTGDTSVSTSQAPIMMWVGDIVKDNSINLLDVAEVIRCFNATKGSANYVEELDINRNGAINMQDIMIVHKHFGATSSDYDAQ.

The 80-residue stretch at 1–80 folds into the Cohesin 1 domain; sequence DPSKSFDSAI…TTFVAGGVNL (80 aa). A linker (Pro/Thr-rich) region spans residues 81–93; it reads GSSVPTTQPNVPS. The Cohesin 2 domain maps to 94–240; it reads DGVVVEIGKV…VNVGNATPTK (147 aa). The segment covering 235–276 has biased composition (low complexity); the sequence is NATPTKGATPTNTATPTKSATATPPGHSVPTNTPTNTPANTP. Disordered regions lie at residues 235 to 277 and 438 to 464; these read NATP…NTPV and VVPS…PSDD. The interval 241–272 is linker (Pro/Thr-rich); the sequence is GATPTNTATPTKSATATPPGHSVPTNTPTNTP. In terms of domain architecture, CBM3 spans 277–435; it reads VSGNLKVEFY…GVLVWGKEPG (159 aa). The segment covering 438–461 has biased composition (low complexity); the sequence is VVPSTQPVTTPPATTKPPATTIPP. The segment at 440–461 is linker (Pro/Thr-rich); the sequence is PSTQPVTTPPATTKPPATTIPP. The Cohesin 3 domain maps to 462 to 607; it reads SDDPNAIKIK…ETDLINGGVL (146 aa). The Dockerin domain occupies 704–771; that stretch reads IMMWVGDIVK…FGATSSDYDA (68 aa).

Post-translationally, O-glycosylated on most but not all Thr residues of the linker units.

Its subcellular location is the secreted. In terms of biological role, acts as a scaffolding protein in the cellulosome. It promotes binding of cellulose to the catalytic domains of the cellulolytic enzymes probably through the binding of the nine repeated domains with dockerin domains present in catalytic subunits of the cellulosome. The protein is Cellulosomal-scaffolding protein B (cipB) of Acetivibrio thermocellus (Hungateiclostridium thermocellum).